Here is a 329-residue protein sequence, read N- to C-terminus: MALPEFTMRQLLEAGVHFGHQSHRWNPKMADYIFGARNNIHIIDLAQTVPLLHTALQAVSDTVAKGGRILFVGTKRQAQDNVADAAKRCAQYFVNSRWLGGTLTNWKTISASIKRLRHLDEVLSSGEANSYTKKERLTLQRERDKLDRSLGGIKDMGGLPDMIFVIDTNKEDIAIQEAQRLNIPVAAIVDTNCDPKGITYVVPGNDDAGRAISLYCDLIARAAIDGISRAQGELGIDVGASAAPLEEDLPAASASTFQGLPGPRGTADDLKKLTGVSGAIEKKLNDLGIFHFWQLAELNHDTAHQIGEEVGLPSRADAWVAQAKSLADA.

It belongs to the universal ribosomal protein uS2 family.

The chain is Small ribosomal subunit protein uS2 from Bradyrhizobium sp. (strain ORS 278).